The following is a 608-amino-acid chain: ESX-3 secretion system protein EccA3 (608 aa).

The segment at 284–303 (EARSDPWDPETEPSEAEFVD) is disordered. Positions 290–301 (WDPETEPSEAEF) are enriched in acidic residues. 365–372 (GPPGTGKT) contributes to the ATP binding site.

It belongs to the CbxX/CfxQ family. Part of the ESX-3 / type VII secretion system (T7SS), which is composed of cytosolic and membrane components.

The protein localises to the cytoplasm. Part of the ESX-3 specialized secretion system, which is required for siderophore-mediated iron acquisition and for the secretion of EsxH and EsxG. EccA3 exhibits ATPase activity and may provide energy for the export of ESX-3 substrates. The protein is ESX-3 secretion system protein EccA3 of Mycolicibacterium smegmatis (strain ATCC 700084 / mc(2)155) (Mycobacterium smegmatis).